The following is a 321-amino-acid chain: Fe-S cluster assembly protein DRE2 (321 aa).

An N-terminal SAM-like domain region spans residues 1–131 (MERMLLLSPP…KPDFGPENIV (131 aa)). The interval 132–213 (PLKLGKRKPV…EETLLDGEDM (82 aa)) is linker. Positions 223, 234, 237, and 239 each coordinate [2Fe-2S] cluster. The segment at 223-239 (CRPKAGKRRRACKDCTC) is fe-S binding site A. [4Fe-4S] cluster-binding residues include C284, C287, C295, and C298. 2 consecutive short sequence motifs (cx2C motif) follow at residues 284–287 (CGNC) and 295–298 (CDGC). Positions 284–298 (CGNCALGDAFRCDGC) are fe-S binding site B.

This sequence belongs to the anamorsin family. Monomer. Interacts with TAH18. Interacts with MIA40. [2Fe-2S] cluster serves as cofactor. [4Fe-4S] cluster is required as a cofactor.

It is found in the cytoplasm. Its subcellular location is the mitochondrion intermembrane space. Component of the cytosolic iron-sulfur (Fe-S) protein assembly (CIA) machinery required for the maturation of extramitochondrial Fe-S proteins. Part of an electron transfer chain functioning in an early step of cytosolic Fe-S biogenesis, facilitating the de novo assembly of a [4Fe-4S] cluster on the scaffold complex CFD1-NBP35. Electrons are transferred to DRE2 from NADPH via the FAD- and FMN-containing protein TAH18. TAH18-DRE2 are also required for the assembly of the diferric tyrosyl radical cofactor of ribonucleotide reductase (RNR), probably by providing electrons for reduction during radical cofactor maturation in the catalytic small subunit RNR2. The polypeptide is Fe-S cluster assembly protein DRE2 (Coccidioides immitis (strain RS) (Valley fever fungus)).